A 141-amino-acid chain; its full sequence is Phosphoribosyl-AMP cyclohydrolase (141 aa).

Residue Asp-88 participates in Mg(2+) binding. Residue Cys-89 participates in Zn(2+) binding. The Mg(2+) site is built by Asp-90 and Asp-92. Zn(2+)-binding residues include Cys-109 and Cys-116.

It belongs to the PRA-CH family. In terms of assembly, homodimer. Requires Mg(2+) as cofactor. It depends on Zn(2+) as a cofactor.

It is found in the cytoplasm. It carries out the reaction 1-(5-phospho-beta-D-ribosyl)-5'-AMP + H2O = 1-(5-phospho-beta-D-ribosyl)-5-[(5-phospho-beta-D-ribosylamino)methylideneamino]imidazole-4-carboxamide. It participates in amino-acid biosynthesis; L-histidine biosynthesis; L-histidine from 5-phospho-alpha-D-ribose 1-diphosphate: step 3/9. Functionally, catalyzes the hydrolysis of the adenine ring of phosphoribosyl-AMP. This is Phosphoribosyl-AMP cyclohydrolase from Paracidovorax citrulli (strain AAC00-1) (Acidovorax citrulli).